A 477-amino-acid polypeptide reads, in one-letter code: Probable F-box protein At5g25300 (477 aa).

Positions 346–377 (VDMNKEDSQIEINEKETKINQEHDQSDETQAK) form a coiled coil. Residues 412-458 (SPPWSELPGDILRSVFERLSFVDFQRAKQTCPIKRSKSNCLRLWLIT) enclose the F-box domain.

This chain is Probable F-box protein At5g25300, found in Arabidopsis thaliana (Mouse-ear cress).